A 338-amino-acid polypeptide reads, in one-letter code: UPF0194 membrane protein in asrC 5'region (338 aa).

Residues 1–23 (MAISPKKRALALVVVLIVAGAVA) form the signal peptide. Positions 148-207 (KQSLDNAAAALKTARANLDRAQQALTLAIKGPRKEDIAAARQQLQADKAGLSLARRELTD) form a coiled coil.

The protein belongs to the UPF0194 family.

It localises to the periplasm. The chain is UPF0194 membrane protein in asrC 5'region from Acidithiobacillus ferridurans.